The chain runs to 700 residues: Elongation factor G (700 aa).

Residues 8 to 290 enclose the tr-type G domain; the sequence is DRYRNVGIMA…AMIMYMPSPL (283 aa). GTP contacts are provided by residues 17 to 24, 88 to 92, and 142 to 145; these read AHIDAGKT, DTPGH, and NKMD.

The protein belongs to the TRAFAC class translation factor GTPase superfamily. Classic translation factor GTPase family. EF-G/EF-2 subfamily.

The protein resides in the cytoplasm. Its function is as follows. Catalyzes the GTP-dependent ribosomal translocation step during translation elongation. During this step, the ribosome changes from the pre-translocational (PRE) to the post-translocational (POST) state as the newly formed A-site-bound peptidyl-tRNA and P-site-bound deacylated tRNA move to the P and E sites, respectively. Catalyzes the coordinated movement of the two tRNA molecules, the mRNA and conformational changes in the ribosome. In Vesicomyosocius okutanii subsp. Calyptogena okutanii (strain HA), this protein is Elongation factor G.